A 292-amino-acid polypeptide reads, in one-letter code: Acetylglutamate kinase (292 aa).

Residues 64–65 (GG), Arg-86, and Asn-190 contribute to the substrate site.

Belongs to the acetylglutamate kinase family. ArgB subfamily.

The protein localises to the cytoplasm. The enzyme catalyses N-acetyl-L-glutamate + ATP = N-acetyl-L-glutamyl 5-phosphate + ADP. Its pathway is amino-acid biosynthesis; L-arginine biosynthesis; N(2)-acetyl-L-ornithine from L-glutamate: step 2/4. Its function is as follows. Catalyzes the ATP-dependent phosphorylation of N-acetyl-L-glutamate. This is Acetylglutamate kinase from Pelobacter propionicus (strain DSM 2379 / NBRC 103807 / OttBd1).